The chain runs to 506 residues: Zinc finger protein 157 (506 aa).

The region spanning Val27–Ser98 is the KRAB domain. 12 C2H2-type zinc fingers span residues Phe162 to His184, Tyr190 to His212, Phe218 to His240, Tyr246 to His268, Tyr274 to His296, Tyr302 to His324, Tyr330 to His352, Tyr358 to His380, Tyr386 to His408, Tyr414 to His436, Tyr442 to His464, and Phe470 to His492.

The protein belongs to the krueppel C2H2-type zinc-finger protein family.

The protein resides in the nucleus. Its function is as follows. May be involved in transcriptional regulation. The sequence is that of Zinc finger protein 157 (ZNF157) from Homo sapiens (Human).